Consider the following 86-residue polypeptide: UPF0125 protein bbp_234 (86 aa).

It belongs to the UPF0125 (RnfH) family.

The chain is UPF0125 protein bbp_234 from Buchnera aphidicola subsp. Baizongia pistaciae (strain Bp).